The sequence spans 473 residues: UDP-glycosyltransferase 71B1 (473 aa).

Catalysis depends on H15, which acts as the Proton acceptor. H15 lines the an anthocyanidin pocket. D110 (charge relay) is an active-site residue. UDP-alpha-D-glucose contacts are provided by T132, A342, Q344, H359, W362, N363, S364, and E367. A382 is a binding site for an anthocyanidin. 2 residues coordinate UDP-alpha-D-glucose: E383 and Q384.

This sequence belongs to the UDP-glycosyltransferase family.

It catalyses the reaction a flavonol + UDP-alpha-D-glucose = a flavonol 3-O-beta-D-glucoside + UDP + H(+). Possesses quercetin 3-O-glucosyltransferase activity in vitro. Also active in vitro on benzoates and benzoate derivatives. In Arabidopsis thaliana (Mouse-ear cress), this protein is UDP-glycosyltransferase 71B1 (UGT71B1).